The following is a 413-amino-acid chain: Putative adhesin P1-like protein MPN_144 (413 aa).

3 stretches are compositionally biased toward polar residues: residues 1-13 (MGQQGQSGTSAGN), 25-54 (SGDSLTTQDGNATGQQEATNYTNLPPNLTP), and 355-376 (SFGTDHSTQPQSLKTTTPVFGT). 2 disordered regions span residues 1-60 (MGQQ…DWPN) and 355-413 (SFGT…VSGH). Positions 385 to 399 (LSGGGAGGGSSGSGQ) are enriched in gly residues.

This sequence belongs to the adhesin P1 family.

The chain is Putative adhesin P1-like protein MPN_144 from Mycoplasma pneumoniae (strain ATCC 29342 / M129 / Subtype 1) (Mycoplasmoides pneumoniae).